We begin with the raw amino-acid sequence, 287 residues long: Glycine--tRNA ligase alpha subunit (287 aa).

The protein belongs to the class-II aminoacyl-tRNA synthetase family. As to quaternary structure, tetramer of two alpha and two beta subunits.

The protein resides in the cytoplasm. It catalyses the reaction tRNA(Gly) + glycine + ATP = glycyl-tRNA(Gly) + AMP + diphosphate. The sequence is that of Glycine--tRNA ligase alpha subunit from Petrotoga mobilis (strain DSM 10674 / SJ95).